Reading from the N-terminus, the 198-residue chain is NADH-quinone oxidoreductase subunit C (198 aa).

The protein belongs to the complex I 30 kDa subunit family. As to quaternary structure, NDH-1 is composed of 14 different subunits. Subunits NuoB, C, D, E, F, and G constitute the peripheral sector of the complex.

Its subcellular location is the cell inner membrane. It catalyses the reaction a quinone + NADH + 5 H(+)(in) = a quinol + NAD(+) + 4 H(+)(out). Its function is as follows. NDH-1 shuttles electrons from NADH, via FMN and iron-sulfur (Fe-S) centers, to quinones in the respiratory chain. The immediate electron acceptor for the enzyme in this species is believed to be ubiquinone. Couples the redox reaction to proton translocation (for every two electrons transferred, four hydrogen ions are translocated across the cytoplasmic membrane), and thus conserves the redox energy in a proton gradient. The chain is NADH-quinone oxidoreductase subunit C from Janthinobacterium sp. (strain Marseille) (Minibacterium massiliensis).